We begin with the raw amino-acid sequence, 159 residues long: Ribonuclease H (159 aa).

In terms of domain architecture, RNase H type-1 spans 1 to 142; that stretch reads MHKQVEIFTD…CDELAKAAAQ (142 aa). D10, E48, D70, and D134 together coordinate Mg(2+). A disordered region spans residues 135–159; the sequence is ELAKAAAQSPTKEDTGYLESQQDKT. Residues 145–159 show a composition bias toward basic and acidic residues; sequence TKEDTGYLESQQDKT.

Belongs to the RNase H family. As to quaternary structure, monomer. The cofactor is Mg(2+).

It localises to the cytoplasm. It carries out the reaction Endonucleolytic cleavage to 5'-phosphomonoester.. Functionally, endonuclease that specifically degrades the RNA of RNA-DNA hybrids. This chain is Ribonuclease H, found in Proteus mirabilis (strain HI4320).